A 133-amino-acid chain; its full sequence is Large ribosomal subunit protein bL20 (133 aa).

It belongs to the bacterial ribosomal protein bL20 family.

Functionally, binds directly to 23S ribosomal RNA and is necessary for the in vitro assembly process of the 50S ribosomal subunit. It is not involved in the protein synthesizing functions of that subunit. This Mesorhizobium japonicum (strain LMG 29417 / CECT 9101 / MAFF 303099) (Mesorhizobium loti (strain MAFF 303099)) protein is Large ribosomal subunit protein bL20.